The primary structure comprises 100 residues: NAD(P)H-quinone oxidoreductase subunit 4L, chloroplastic (100 aa).

The next 3 helical transmembrane spans lie at 1–21 (MLEH…YGLI), 31–51 (MCLE…SDFF), and 60–80 (IFSI…PAIL).

The protein belongs to the complex I subunit 4L family. In terms of assembly, NDH is composed of at least 16 different subunits, 5 of which are encoded in the nucleus.

The protein localises to the plastid. It is found in the chloroplast thylakoid membrane. It carries out the reaction a plastoquinone + NADH + (n+1) H(+)(in) = a plastoquinol + NAD(+) + n H(+)(out). The enzyme catalyses a plastoquinone + NADPH + (n+1) H(+)(in) = a plastoquinol + NADP(+) + n H(+)(out). In terms of biological role, NDH shuttles electrons from NAD(P)H:plastoquinone, via FMN and iron-sulfur (Fe-S) centers, to quinones in the photosynthetic chain and possibly in a chloroplast respiratory chain. The immediate electron acceptor for the enzyme in this species is believed to be plastoquinone. Couples the redox reaction to proton translocation, and thus conserves the redox energy in a proton gradient. The protein is NAD(P)H-quinone oxidoreductase subunit 4L, chloroplastic of Cucumis sativus (Cucumber).